Reading from the N-terminus, the 190-residue chain is Heme-binding protein 1 (190 aa).

It belongs to the HEBP family. Monomer. In terms of tissue distribution, ubiquitously expressed. Extremely abundant in liver.

It localises to the cytoplasm. In terms of biological role, may bind free porphyrinogens that may be present in the cell and thus facilitate removal of these potentially toxic compound. Binds with a high affinity to one molecule of heme or porphyrins. It binds metalloporphyrins, free porphyrins and N-methylprotoporphyrin with similar affinities. This Mus musculus (Mouse) protein is Heme-binding protein 1 (Hebp1).